Reading from the N-terminus, the 706-residue chain is Serotransferrin (706 aa).

The signal sequence occupies residues 1-19 (MRLAIRALLACAVLGLCLA). Transferrin-like domains are found at residues 23-349 (VRWC…NLRE) and 363-691 (VKWC…NLRQ). Cystine bridges form between Cys26-Cys64 and Cys36-Cys55. Dimethylated arginine is present on Arg40. Fe(3+) is bound by residues Asp79 and Tyr111. Cystine bridges form between Cys134/Cys215, Cys174/Cys190, Cys177/Cys198, Cys187/Cys200, and Cys248/Cys262. Hydrogencarbonate is bound by residues Thr136, Arg140, Ala142, and Gly143. Tyr209 provides a ligand contact to Fe(3+). His270 lines the Fe(3+) pocket. Cystine bridges form between Cys360–Cys623, Cys366–Cys398, Cys376–Cys389, Cys423–Cys701, Cys441–Cys664, Cys474–Cys550, Cys498–Cys692, Cys508–Cys522, Cys519–Cys533, Cys590–Cys604, and Cys642–Cys647. A Phosphoserine modification is found at Ser391. Residues Asp413 and Tyr449 each contribute to the Fe(3+) site. Residues Thr476, Arg480, Ala482, and Gly483 each coordinate hydrogencarbonate. N-linked (GlcNAc...) asparagine glycosylation occurs at Asn515. Tyr544 is a Fe(3+) binding site. His612 serves as a coordination point for Fe(3+). Ser693 bears the Phosphoserine mark.

This sequence belongs to the transferrin family. Monomer. Part of a complex composed of SLC40A1/ferroportin, TF/transferrin and HEPH/hephaestin that transfers iron from cells to transferrin. Expressed by the liver and secreted in plasma.

Its subcellular location is the secreted. Functionally, transferrins are iron binding transport proteins which can bind two Fe(3+) ions in association with the binding of an anion, usually bicarbonate. It is responsible for the transport of iron from sites of absorption and heme degradation to those of storage and utilization. Serum transferrin may also have a further role in stimulating cell proliferation. The protein is Serotransferrin (TF) of Equus caballus (Horse).